The following is a 207-amino-acid chain: Crossover junction endodeoxyribonuclease RuvC (207 aa).

Active-site residues include Asp11, Glu71, and Asp143. Mg(2+)-binding residues include Asp11, Glu71, and Asp143.

Belongs to the RuvC family. In terms of assembly, homodimer which binds Holliday junction (HJ) DNA. The HJ becomes 2-fold symmetrical on binding to RuvC with unstacked arms; it has a different conformation from HJ DNA in complex with RuvA. In the full resolvosome a probable DNA-RuvA(4)-RuvB(12)-RuvC(2) complex forms which resolves the HJ. It depends on Mg(2+) as a cofactor.

The protein resides in the cytoplasm. It catalyses the reaction Endonucleolytic cleavage at a junction such as a reciprocal single-stranded crossover between two homologous DNA duplexes (Holliday junction).. Its function is as follows. The RuvA-RuvB-RuvC complex processes Holliday junction (HJ) DNA during genetic recombination and DNA repair. Endonuclease that resolves HJ intermediates. Cleaves cruciform DNA by making single-stranded nicks across the HJ at symmetrical positions within the homologous arms, yielding a 5'-phosphate and a 3'-hydroxyl group; requires a central core of homology in the junction. The consensus cleavage sequence is 5'-(A/T)TT(C/G)-3'. Cleavage occurs on the 3'-side of the TT dinucleotide at the point of strand exchange. HJ branch migration catalyzed by RuvA-RuvB allows RuvC to scan DNA until it finds its consensus sequence, where it cleaves and resolves the cruciform DNA. This chain is Crossover junction endodeoxyribonuclease RuvC, found in Methylobacterium radiotolerans (strain ATCC 27329 / DSM 1819 / JCM 2831 / NBRC 15690 / NCIMB 10815 / 0-1).